A 196-amino-acid chain; its full sequence is UPF0215 protein MA_4269 (196 aa).

This sequence belongs to the UPF0215 family.

The chain is UPF0215 protein MA_4269 from Methanosarcina acetivorans (strain ATCC 35395 / DSM 2834 / JCM 12185 / C2A).